A 551-amino-acid polypeptide reads, in one-letter code: Chaperonin GroEL (551 aa).

ATP-binding positions include 30 to 33 (TLGP), Lys51, 87 to 91 (DGTTT), Gly415, 481 to 483 (NAA), and Asp497.

This sequence belongs to the chaperonin (HSP60) family. Forms a cylinder of 14 subunits composed of two heptameric rings stacked back-to-back. Interacts with the co-chaperonin GroES.

The protein resides in the cytoplasm. It carries out the reaction ATP + H2O + a folded polypeptide = ADP + phosphate + an unfolded polypeptide.. Functionally, together with its co-chaperonin GroES, plays an essential role in assisting protein folding. The GroEL-GroES system forms a nano-cage that allows encapsulation of the non-native substrate proteins and provides a physical environment optimized to promote and accelerate protein folding. This chain is Chaperonin GroEL, found in Magnetococcus marinus (strain ATCC BAA-1437 / JCM 17883 / MC-1).